Here is a 58-residue protein sequence, read N- to C-terminus: Large ribosomal subunit protein bL32 (58 aa).

Belongs to the bacterial ribosomal protein bL32 family.

The chain is Large ribosomal subunit protein bL32 from Anaplasma marginale (strain Florida).